The sequence spans 297 residues: Phosphatidylinositol N-acetylglucosaminyltransferase subunit C (297 aa).

A run of 4 helical transmembrane segments spans residues 67–87 (VFVV…WLFG), 88–108 (TGLA…GGDG), 153–173 (AVFM…AAIV), and 239–259 (AFGG…LLLF).

The protein belongs to the PIGC family. Component of the glycosylphosphatidylinositol-N-acetylglucosaminyltransferase (GPI-GnT) complex composed at least by PIGA, PIGC, PIGH, PIGP, PIGQ, PIGY and DPM2. Interacts with PIGQ. Interacts with the heterodimer PIGA:PIGH.

The protein resides in the endoplasmic reticulum membrane. Its pathway is glycolipid biosynthesis; glycosylphosphatidylinositol-anchor biosynthesis. Functionally, part of the glycosylphosphatidylinositol-N-acetylglucosaminyltransferase (GPI-GnT) complex that catalyzes the transfer of N-acetylglucosamine from UDP-N-acetylglucosamine to phosphatidylinositol and participates in the first step of GPI biosynthesis. The chain is Phosphatidylinositol N-acetylglucosaminyltransferase subunit C from Mus musculus (Mouse).